A 311-amino-acid polypeptide reads, in one-letter code: N-acetyl-gamma-glutamyl-phosphate reductase (311 aa).

C117 is an active-site residue.

It belongs to the NAGSA dehydrogenase family. Type 2 subfamily.

It localises to the cytoplasm. It carries out the reaction N-acetyl-L-glutamate 5-semialdehyde + phosphate + NADP(+) = N-acetyl-L-glutamyl 5-phosphate + NADPH + H(+). The protein operates within amino-acid biosynthesis; L-arginine biosynthesis; N(2)-acetyl-L-ornithine from L-glutamate: step 3/4. Functionally, catalyzes the NADPH-dependent reduction of N-acetyl-5-glutamyl phosphate to yield N-acetyl-L-glutamate 5-semialdehyde. The protein is N-acetyl-gamma-glutamyl-phosphate reductase of Brucella anthropi (strain ATCC 49188 / DSM 6882 / CCUG 24695 / JCM 21032 / LMG 3331 / NBRC 15819 / NCTC 12168 / Alc 37) (Ochrobactrum anthropi).